A 428-amino-acid polypeptide reads, in one-letter code: Putative zinc metalloprotease SAR1238 (428 aa).

H21 provides a ligand contact to Zn(2+). E22 is an active-site residue. Residue H25 coordinates Zn(2+). 4 helical membrane-spanning segments follow: residues 172–194 (FLTL…IGLA), 309–331 (GSTY…GFSF), 352–374 (IISL…LIPI), and 401–420 (TTII…LVTW). A PDZ domain is found at 186–269 (ALVLFIGLAY…TKSVELTPKK (84 aa)).

Belongs to the peptidase M50B family. Zn(2+) is required as a cofactor.

The protein localises to the cell membrane. This is Putative zinc metalloprotease SAR1238 from Staphylococcus aureus (strain MRSA252).